The primary structure comprises 156 residues: Small ribosomal subunit protein uS7 (156 aa).

It belongs to the universal ribosomal protein uS7 family. Part of the 30S ribosomal subunit. Contacts proteins S9 and S11.

Its function is as follows. One of the primary rRNA binding proteins, it binds directly to 16S rRNA where it nucleates assembly of the head domain of the 30S subunit. Is located at the subunit interface close to the decoding center, probably blocks exit of the E-site tRNA. The sequence is that of Small ribosomal subunit protein uS7 from Parasynechococcus marenigrum (strain WH8102).